We begin with the raw amino-acid sequence, 361 residues long: MTTAVRLLPSLGRTAHKRSLYLFSAAAAAAAAATFAYSQSQKRSSSSPGGGSNHGWNNWGKAAALASTTPLVHVASVEKGRSYEDFQKVYNAIALKLREDDEYDNYIGYGPVLVRLAWHTSGTWDKHDNTGGSYGGTYRFKKEFNDPSNAGLQNGFKFLEPIHKEFPWISSGDLFSLGGVTAVQEMQGPKIPWRCGRVDTPEDTTPDNGRLPDADKDADYVRTFFQRLNMNDREVVALMGAHALGKTHLKNSGYEGPWGAANNVFTNEFYLNLLNEDWKLEKNDANNEQWDSKSGYMMLPTDYSLIQDPKYLSIVKEYANDQDKFFKDFSKAFEKLLENGITFPKDAPSPFIFKTLEEQGL.

The N-terminal 67 residues, 1 to 67 (MTTAVRLLPS…NWGKAAALAS (67 aa)), are a transit peptide targeting the mitochondrion. H119 acts as the Proton acceptor in catalysis. Residue Y220 is modified to Phosphotyrosine. H242 serves as a coordination point for heme b. The active-site Tryptophan radical intermediate is W258.

It belongs to the peroxidase family. Cytochrome c peroxidase subfamily. As to quaternary structure, forms a one-to-one complex with cytochrome c. Requires heme b as cofactor. CCP1 precursor is processed by the rhomboid protease PCP1, which cleaves the N-terminal hydrophobic transit peptide. The m-AAA protease (composed of YTA12/RCA1 and YTA10/AFG3) is required for CCP1 maturation: m-AAA protease promotes membrane dislocation of the CCP1 transmembrane segment within the transit peptide to ensure the correct positioning of CCP1 within the membrane bilayer, allowing intramembrane cleavage by PCP1.

The protein localises to the mitochondrion matrix. The protein resides in the mitochondrion intermembrane space. It carries out the reaction 2 Fe(II)-[cytochrome c] + H2O2 + 2 H(+) = 2 Fe(III)-[cytochrome c] + 2 H2O. Its function is as follows. Destroys radicals which are normally produced within the cells and which are toxic to biological systems. The polypeptide is Cytochrome c peroxidase, mitochondrial (CCP1) (Saccharomyces cerevisiae (strain ATCC 204508 / S288c) (Baker's yeast)).